The following is a 129-amino-acid chain: Ribosome-binding factor A (129 aa).

It belongs to the RbfA family. As to quaternary structure, monomer. Binds 30S ribosomal subunits, but not 50S ribosomal subunits or 70S ribosomes.

Its subcellular location is the cytoplasm. In terms of biological role, one of several proteins that assist in the late maturation steps of the functional core of the 30S ribosomal subunit. Associates with free 30S ribosomal subunits (but not with 30S subunits that are part of 70S ribosomes or polysomes). Required for efficient processing of 16S rRNA. May interact with the 5'-terminal helix region of 16S rRNA. This Desulfosudis oleivorans (strain DSM 6200 / JCM 39069 / Hxd3) (Desulfococcus oleovorans) protein is Ribosome-binding factor A.